A 198-amino-acid chain; its full sequence is Chromophore lyase CpcT/CpeT 3 (198 aa).

The protein belongs to the CpcT/CpeT biliprotein lyase family.

Covalently attaches a chromophore to Cys residue(s) of phycobiliproteins. The protein is Chromophore lyase CpcT/CpeT 3 of Synechococcus sp. (strain JA-3-3Ab) (Cyanobacteria bacterium Yellowstone A-Prime).